The sequence spans 209 residues: MTYCNKSNQTSYPFILPDLPYEKESFKPHFTLETFDYHHGKHHNTYVQNLNNLLKDKEELQKKDLEEIIEWSSQNSNAAIFNNAAQIWNHTFFWHSIKPQGGGKPSGKILEQINKDFGSFEEFCEQFKQEAVGQFGSGWAWLIYHDNRLQIIKTANAGTPIAHGMKPLLACDVWEHAYYIDYRNKRPDYVDIFIKHMINWKFVEDNLIK.

Fe(3+) is bound by residues H38, H90, D172, and H176. H38, H90, D172, and H176 together coordinate Mn(2+).

The protein belongs to the iron/manganese superoxide dismutase family. The cofactor is Mn(2+). Fe(3+) serves as cofactor.

The catalysed reaction is 2 superoxide + 2 H(+) = H2O2 + O2. Destroys superoxide anion radicals which are normally produced within the cells and which are toxic to biological systems. Catalyzes the dismutation of superoxide anion radicals into O2 and H2O2 by successive reduction and oxidation of the transition metal ion at the active site. This chain is Superoxide dismutase [Mn/Fe] (sodB), found in Rickettsia conorii (strain ATCC VR-613 / Malish 7).